The chain runs to 116 residues: Large ribosomal subunit protein uL18 (116 aa).

This sequence belongs to the universal ribosomal protein uL18 family. As to quaternary structure, part of the 50S ribosomal subunit; part of the 5S rRNA/L5/L18/L25 subcomplex. Contacts the 5S and 23S rRNAs.

This is one of the proteins that bind and probably mediate the attachment of the 5S RNA into the large ribosomal subunit, where it forms part of the central protuberance. This chain is Large ribosomal subunit protein uL18, found in Hahella chejuensis (strain KCTC 2396).